Here is a 217-residue protein sequence, read N- to C-terminus: Small ribosomal subunit protein uS2 (217 aa).

Belongs to the universal ribosomal protein uS2 family.

This Korarchaeum cryptofilum (strain OPF8) protein is Small ribosomal subunit protein uS2.